The sequence spans 717 residues: Pre-mRNA-splicing factor ATP-dependent RNA helicase DEAH10 (717 aa).

The segment at 1–29 (MPSMAQGELKSFVQNSRPNPKSPTVSPFS) is disordered. Residues 12 to 29 (FVQNSRPNPKSPTVSPFS) show a composition bias toward polar residues. The Helicase ATP-binding domain occupies 51–256 (VEEVQKNDIL…FGGAKAVHVQ (206 aa)). 64 to 71 (GETGSGKT) serves as a coordination point for ATP. The DEAH box signature appears at 162-165 (DEAH). Residues 278 to 453 (TLVTIFQIHF…NIILQLKALG (176 aa)) enclose the Helicase C-terminal domain.

This sequence belongs to the DEAD box helicase family. DEAH subfamily. PRP22 sub-subfamily. Widely expressed but spatially and temporally regulated during development.

It localises to the nucleus. The protein resides in the nucleolus. The catalysed reaction is ATP + H2O = ADP + phosphate + H(+). Involved in pre-mRNA splicing. Plays a role during development in processes such as meristem maintenance, leaf morphogenesis and root morphogenesis. This chain is Pre-mRNA-splicing factor ATP-dependent RNA helicase DEAH10, found in Arabidopsis thaliana (Mouse-ear cress).